Consider the following 94-residue polypeptide: Co-chaperonin GroES (94 aa).

Belongs to the GroES chaperonin family. As to quaternary structure, heptamer of 7 subunits arranged in a ring. Interacts with the chaperonin GroEL.

The protein localises to the cytoplasm. Together with the chaperonin GroEL, plays an essential role in assisting protein folding. The GroEL-GroES system forms a nano-cage that allows encapsulation of the non-native substrate proteins and provides a physical environment optimized to promote and accelerate protein folding. GroES binds to the apical surface of the GroEL ring, thereby capping the opening of the GroEL channel. This is Co-chaperonin GroES from Pediococcus pentosaceus (strain ATCC 25745 / CCUG 21536 / LMG 10740 / 183-1w).